We begin with the raw amino-acid sequence, 207 residues long: Superoxide dismutase [Mn] (207 aa).

Mn(2+) is bound by residues His28, His76, Asp160, and His164.

Belongs to the iron/manganese superoxide dismutase family. In terms of assembly, homotetramer. Requires Mn(2+) as cofactor.

Its subcellular location is the secreted. The enzyme catalyses 2 superoxide + 2 H(+) = H2O2 + O2. Its function is as follows. Destroys superoxide anion radicals which are normally produced within the cells and which are toxic to biological systems. The chain is Superoxide dismutase [Mn] (sodA) from Mycolicibacterium smegmatis (Mycobacterium smegmatis).